The sequence spans 592 residues: Beta-fructofuranosidase, insoluble isoenzyme 2 (592 aa).

The first 40 residues, 1-40 (MLIRCFHIKMALVTCFHSMLFLSAVVFIFSLDVNIRGVEA), serve as a signal peptide directing secretion. Residue aspartate 75 is part of the active site. Asparagine 171, asparagine 195, asparagine 310, asparagine 347, and asparagine 568 each carry an N-linked (GlcNAc...) asparagine glycan.

It belongs to the glycosyl hydrolase 32 family.

It localises to the secreted. The protein resides in the cell wall. The catalysed reaction is Hydrolysis of terminal non-reducing beta-D-fructofuranoside residues in beta-D-fructofuranosides.. In terms of biological role, may play an important role in phloem unloading and in stress response. In Daucus carota (Wild carrot), this protein is Beta-fructofuranosidase, insoluble isoenzyme 2 (INV2).